The chain runs to 311 residues: AT-hook motif nuclear-localized protein 27 (311 aa).

Residues 40 to 105 (HHHQHQQHQQ…KNKAKPPIIV (66 aa)) form a disordered region. A compositionally biased stretch (basic and acidic residues) spans 55–75 (DDSRESDHSNKDHHQQGRPDS). The a.T hook DNA-binding region spans 86–98 (KRPRGRPPGSKNK). The 149-residue stretch at 110–258 (PNALRSHVLE…EEGGGGGGGG (149 aa)) folds into the PPC domain. A required for the binding to non-AHL interactors region spans residues 178–183 (GRFEIL). The segment at 246–311 (EEEEEGGGGG…GAGTPSRPPF (66 aa)) is disordered. Positions 252-262 (GGGGGGGGGGP) are enriched in gly residues. The segment covering 263–277 (PQMQQAPSASPPSGV) has biased composition (low complexity). Residues 278–292 (TGQGQLGGNVGGYGF) show a composition bias toward gly residues.

As to quaternary structure, homodimer. Interacts with AHL12, AHL25, AHL29, TCP4, TCP13, EF114, ATAF2/NAC081, histone H2B.1, histone H3.3 and histone H4. In terms of tissue distribution, expressed in the hypocotyl and the vascular tissue of seedling.

The protein resides in the nucleus. In terms of biological role, transcription factor that specifically binds AT-rich DNA sequences related to the nuclear matrix attachment regions (MARs). Negatively regulates plant innate immunity (PTI) to pathogens through the down-regulation of the PAMP-triggered FRK1 expression. Acts redundantly with AHL18, AHL22 and AHL29 in the regulation of flowering and regulation of the hypocotyl elongation. Acts as a chromatin remodeling factor that negatively regulates the leaf senescence. Acts redundantly with AHL29/SOB3 to modulate hypocotyl growth inhibition in response to light. The protein is AT-hook motif nuclear-localized protein 27 of Arabidopsis thaliana (Mouse-ear cress).